The chain runs to 639 residues: 2-oxoacid:ferredoxin oxidoreductase 1, subunit alpha (639 aa).

A YPITP motif motif is present at residues 266-270 (YPITP). 2 residues coordinate substrate: Thr269 and Arg352.

Heterodimer composed of an alpha and a beta subunit.

It carries out the reaction a 2-oxocarboxylate + 2 oxidized [2Fe-2S]-[ferredoxin] + CoA = an acyl-CoA + 2 reduced [2Fe-2S]-[ferredoxin] + CO2 + H(+). In terms of biological role, catalyzes the coenzyme A-dependent oxidative decarboxylation of different 2-oxoacids such as pyruvate, 2-oxobutyrate and glyoxylate to form their CoA derivatives. In Aeropyrum pernix (strain ATCC 700893 / DSM 11879 / JCM 9820 / NBRC 100138 / K1), this protein is 2-oxoacid:ferredoxin oxidoreductase 1, subunit alpha.